A 118-amino-acid polypeptide reads, in one-letter code: Large ribosomal subunit protein bL19 (118 aa).

Belongs to the bacterial ribosomal protein bL19 family.

Functionally, this protein is located at the 30S-50S ribosomal subunit interface and may play a role in the structure and function of the aminoacyl-tRNA binding site. In Marinobacter nauticus (strain ATCC 700491 / DSM 11845 / VT8) (Marinobacter aquaeolei), this protein is Large ribosomal subunit protein bL19.